We begin with the raw amino-acid sequence, 194 residues long: Peptidyl-tRNA hydrolase (194 aa).

Y17 serves as a coordination point for tRNA. The active-site Proton acceptor is H22. TRNA contacts are provided by F68, N70, and N116.

Belongs to the PTH family. Monomer.

It is found in the cytoplasm. The enzyme catalyses an N-acyl-L-alpha-aminoacyl-tRNA + H2O = an N-acyl-L-amino acid + a tRNA + H(+). Its function is as follows. Hydrolyzes ribosome-free peptidyl-tRNAs (with 1 or more amino acids incorporated), which drop off the ribosome during protein synthesis, or as a result of ribosome stalling. Functionally, catalyzes the release of premature peptidyl moieties from peptidyl-tRNA molecules trapped in stalled 50S ribosomal subunits, and thus maintains levels of free tRNAs and 50S ribosomes. This Pasteurella multocida (strain Pm70) protein is Peptidyl-tRNA hydrolase.